Here is a 1063-residue protein sequence, read N- to C-terminus: Presequence protease, mitochondrial (1063 aa).

The N-terminal 33 residues, 1–33, are a transit peptide targeting the mitochondrion; the sequence is MLRLANRVSRKDSGNLGIAQLKKRLLATSGVSQ. Position 105 (His-105) interacts with Zn(2+). Catalysis depends on Glu-108, which acts as the Proton acceptor. His-109 provides a ligand contact to Zn(2+). Glu-181 is a catalytic residue. Residue Glu-206 coordinates Zn(2+).

It belongs to the peptidase M16 family. PreP subfamily. Monomer and homodimer; homodimerization is induced by binding of the substrate. The cofactor is Zn(2+).

It localises to the mitochondrion intermembrane space. The protein resides in the mitochondrion matrix. In terms of biological role, degrades mitochondrial transit peptides after their cleavage in the intermembrane space or in the matrix, and presequence peptides; clearance of these peptides is required to keep the presequence processing machinery running. Preferentially cleaves the N-terminal side of paired basic amino acid residues. Also degrades other unstructured peptides. May function as an ATP-dependent peptidase as opposed to a metalloendopeptidase. This chain is Presequence protease, mitochondrial (CYM1), found in Debaryomyces hansenii (strain ATCC 36239 / CBS 767 / BCRC 21394 / JCM 1990 / NBRC 0083 / IGC 2968) (Yeast).